A 251-amino-acid polypeptide reads, in one-letter code: Exotoxin type A (251 aa).

Residues methionine 1 to alanine 30 form the signal peptide. The cysteines at positions 117 and 128 are disulfide-linked.

The protein belongs to the staphylococcal/streptococcal toxin family.

Its function is as follows. Causative agent of the symptoms associated with scarlet fever, have been associated with streptococcal toxic shock-like disease and may play a role in the early events of rheumatic fever. This chain is Exotoxin type A (speA), found in Streptococcus pyogenes serotype M18 (strain MGAS8232).